A 53-amino-acid chain; its full sequence is Large ribosomal subunit protein bL33 (53 aa).

Belongs to the bacterial ribosomal protein bL33 family.

The chain is Large ribosomal subunit protein bL33 from Malacoplasma penetrans (strain HF-2) (Mycoplasma penetrans).